The chain runs to 118 residues: Large ribosomal subunit protein bL20 (118 aa).

It belongs to the bacterial ribosomal protein bL20 family.

Functionally, binds directly to 23S ribosomal RNA and is necessary for the in vitro assembly process of the 50S ribosomal subunit. It is not involved in the protein synthesizing functions of that subunit. This chain is Large ribosomal subunit protein bL20, found in Stutzerimonas stutzeri (strain A1501) (Pseudomonas stutzeri).